A 592-amino-acid polypeptide reads, in one-letter code: Monocopper oxidase-like protein SKS2 (592 aa).

Positions 1-23 are cleaved as a signal peptide; it reads MAATDFFFAFVFSFALIFGFSFA. 11 N-linked (GlcNAc...) asparagine glycosylation sites follow: N61, N110, N172, N203, N259, N280, N295, N344, N364, N433, and N447. H455 serves as a coordination point for Cu cation. N-linked (GlcNAc...) asparagine glycans are attached at residues N476 and N536. S564 carries the GPI-anchor amidated serine lipid modification. Residues 565–592 constitute a propeptide, removed in mature form; the sequence is ATKSMTNGQLILIFSMMMVLLSSFSSFC.

Belongs to the multicopper oxidase family. Cu cation is required as a cofactor.

It localises to the cell membrane. This Arabidopsis thaliana (Mouse-ear cress) protein is Monocopper oxidase-like protein SKS2 (SKS2).